Here is a 235-residue protein sequence, read N- to C-terminus: 7-carboxy-7-deazaguanine synthase (235 aa).

Residues 27 to 29 and Arg42 each bind substrate; that span reads LQG. The Radical SAM core domain maps to 33-235; that stretch reads FSGQPSVFVR…VQVHKILKIA (203 aa). Cys46, Cys50, and Cys53 together coordinate [4Fe-4S] cluster. Thr55 contributes to the Mg(2+) binding site. Thr87 contributes to the substrate binding site. Residues Gly89 and 133 to 135 contribute to the S-adenosyl-L-methionine site; that span reads SPK.

The protein belongs to the radical SAM superfamily. 7-carboxy-7-deazaguanine synthase family. Homodimer. [4Fe-4S] cluster is required as a cofactor. S-adenosyl-L-methionine serves as cofactor. It depends on Mg(2+) as a cofactor.

The catalysed reaction is 6-carboxy-5,6,7,8-tetrahydropterin + H(+) = 7-carboxy-7-deazaguanine + NH4(+). It functions in the pathway purine metabolism; 7-cyano-7-deazaguanine biosynthesis. Its function is as follows. Catalyzes the complex heterocyclic radical-mediated conversion of 6-carboxy-5,6,7,8-tetrahydropterin (CPH4) to 7-carboxy-7-deazaguanine (CDG), a step common to the biosynthetic pathways of all 7-deazapurine-containing compounds. The protein is 7-carboxy-7-deazaguanine synthase of Rhodospirillum rubrum (strain ATCC 11170 / ATH 1.1.1 / DSM 467 / LMG 4362 / NCIMB 8255 / S1).